Here is a 215-residue protein sequence, read N- to C-terminus: Adenylate kinase (215 aa).

10–15 (GAGKGT) serves as a coordination point for ATP. The tract at residues 30–59 (STGDILRANVRDGTKLGKEAKGYMDKGELV) is NMP. Residues Thr-31, Arg-36, 57–59 (ELV), 85–88 (GYPR), and Gln-92 contribute to the AMP site. The LID stretch occupies residues 126–162 (GRYVCTCGESYHMKFNPPKKENVCDACGADLYQRDDD). An ATP-binding site is contributed by Arg-127. Cys-130 and Cys-132 together coordinate Zn(2+). 135 to 136 (SY) contributes to the ATP binding site. The Zn(2+) site is built by Cys-149 and Cys-152. Residues Arg-159 and Arg-170 each contribute to the AMP site. Gly-198 serves as a coordination point for ATP.

It belongs to the adenylate kinase family. As to quaternary structure, monomer.

The protein localises to the cytoplasm. It carries out the reaction AMP + ATP = 2 ADP. It participates in purine metabolism; AMP biosynthesis via salvage pathway; AMP from ADP: step 1/1. Its function is as follows. Catalyzes the reversible transfer of the terminal phosphate group between ATP and AMP. Plays an important role in cellular energy homeostasis and in adenine nucleotide metabolism. The chain is Adenylate kinase from Methanococcoides burtonii (strain DSM 6242 / NBRC 107633 / OCM 468 / ACE-M).